The sequence spans 450 residues: UDP-N-acetylmuramoylalanine--D-glutamate ligase (450 aa).

119–125 (GSNGKTT) is an ATP binding site.

Belongs to the MurCDEF family.

It is found in the cytoplasm. It carries out the reaction UDP-N-acetyl-alpha-D-muramoyl-L-alanine + D-glutamate + ATP = UDP-N-acetyl-alpha-D-muramoyl-L-alanyl-D-glutamate + ADP + phosphate + H(+). It participates in cell wall biogenesis; peptidoglycan biosynthesis. Functionally, cell wall formation. Catalyzes the addition of glutamate to the nucleotide precursor UDP-N-acetylmuramoyl-L-alanine (UMA). The sequence is that of UDP-N-acetylmuramoylalanine--D-glutamate ligase from Streptococcus sanguinis (strain SK36).